The primary structure comprises 777 residues: Ethylene receptor 4 (777 aa).

Helical transmembrane passes span 49–69 (LLIA…ATCA), 77–97 (AVLH…LAAF), and 113–133 (AAKV…LTFI). Cu cation is bound by residues Cys-88 and His-92. The region spanning 184-344 (DAHAILRTTA…VVADQAAVAL (161 aa)) is the GAF domain. Residues 387 to 521 (AMCHAMRRPV…NTGSGACRLS (135 aa)) enclose the Histidine kinase domain. His-390 carries the phosphohistidine; by autocatalysis modification. Positions 645 to 774 (RVLLADDDAM…ALGAQLCRVL (130 aa)) constitute a Response regulatory domain. A 4-aspartylphosphate modification is found at Asp-696.

This sequence belongs to the ethylene receptor family. It depends on Cu cation as a cofactor.

The protein resides in the endoplasmic reticulum membrane. The catalysed reaction is ATP + protein L-histidine = ADP + protein N-phospho-L-histidine.. In terms of biological role, ethylene receptor related to bacterial two-component regulators. Acts as a redundant negative regulator of ethylene signaling. This is Ethylene receptor 4 (ETR4) from Oryza sativa subsp. japonica (Rice).